A 2223-amino-acid chain; its full sequence is Sperm-associated antigen 17 (2223 aa).

Basic and acidic residues-rich tracts occupy residues 144-172 and 200-212; these read RENEKKVIEDKPKLEKDKGKAKSPKEKKA and RRGEDDHTNRYID. Positions 144-214 are disordered; that stretch reads RENEKKVIED…DHTNRYIDDE (71 aa). A coiled-coil region spans residues 266-295; that stretch reads NQQQEVLLQSEDLEAEKLKKENAIKELKTF. Disordered stretches follow at residues 387–416, 680–710, 731–762, 950–1015, 1179–1212, and 1345–1378; these read MPTSEAPQPAVPAPGKKKAQYEEPQAPPPV, MSVQDNESNREPSDPSQCDANNMKHSDLNNL, PQHESLEQTTNNEIKDDAVTKADSHEKKPKKM, EERL…EPKI, GKIKGKEKPKESLKEEEHPKEEEKKEEEVEPEPV, and ETIPSEITNTKKGKSHKSQSSMAHKGEIHDPPPE. Basic and acidic residues-rich tracts occupy residues 743–756, 950–999, and 1182–1205; these read EIKDDAVTKADSHE, EERL…EQVK, and KGKEKPKESLKEEEHPKEEEKKEE. Residues 940–966 adopt a coiled-coil conformation; that stretch reads WKEEQHRLAEEERLREEKKAEKKGKEA. Polar residues predominate over residues 1345-1354; it reads ETIPSEITNT. Positions 1874-1907 form a coiled coil; it reads RHTASSKRWKEKIDKTRKEIETTQNYLMDIKNRI. Disordered regions lie at residues 1938-1957 and 1962-2008; these read TKKNEDANETAVQDTSDLNL and HKVS…SYEP. The segment covering 1988 to 1998 has biased composition (polar residues); it reads TAQNQTENLTK.

In terms of assembly, interacts (via the C-terminus) with SPAG6; the interaction probably occurs on polymerized microtubules. Highly expressed in testis. Expressed in organs that contain cilia-bearing cells including brain, oviduct, lung, and uterus.

It localises to the cytoplasm. It is found in the cytoskeleton. Its subcellular location is the flagellum axoneme. The protein localises to the cytoplasmic vesicle. The protein resides in the secretory vesicle. It localises to the acrosome. It is found in the golgi apparatus. Component of the central pair apparatus of ciliary axonemes. Plays a critical role in the function and structure of motile cilia. May play a role in endochondral bone formation, most likely because of a function in primary cilia of chondrocytes and osteoblasts. Essential for normal spermatogenesis and male fertility. Required for normal manchette structure, transport of proteins along the manchette microtubules and formation of the sperm head and flagellum. Essential for sperm flagellum development and proper assembly of the respiratory motile cilia central pair apparatus, but not the brain ependymal cilia. The sequence is that of Sperm-associated antigen 17 (SPAG17) from Homo sapiens (Human).